The sequence spans 333 residues: Ornithine carbamoyltransferase (333 aa).

Carbamoyl phosphate contacts are provided by residues 56–59 (STRT), Arg107, and 134–137 (HPTQ). L-ornithine-binding positions include Asn167, Asp231, and 235–236 (SM). Residues 273 to 274 (CL) and Arg318 contribute to the carbamoyl phosphate site.

It belongs to the aspartate/ornithine carbamoyltransferase superfamily. OTCase family.

It is found in the cytoplasm. It catalyses the reaction carbamoyl phosphate + L-ornithine = L-citrulline + phosphate + H(+). Its pathway is amino-acid degradation; L-arginine degradation via ADI pathway; carbamoyl phosphate from L-arginine: step 2/2. Its function is as follows. Reversibly catalyzes the transfer of the carbamoyl group from carbamoyl phosphate (CP) to the N(epsilon) atom of ornithine (ORN) to produce L-citrulline. The protein is Ornithine carbamoyltransferase of Clostridium botulinum (strain Langeland / NCTC 10281 / Type F).